A 122-amino-acid chain; its full sequence is Large ribosomal subunit protein uL14 (122 aa).

This sequence belongs to the universal ribosomal protein uL14 family. In terms of assembly, part of the 50S ribosomal subunit. Forms a cluster with proteins L3 and L19. In the 70S ribosome, L14 and L19 interact and together make contacts with the 16S rRNA in bridges B5 and B8.

Its function is as follows. Binds to 23S rRNA. Forms part of two intersubunit bridges in the 70S ribosome. The sequence is that of Large ribosomal subunit protein uL14 from Colwellia psychrerythraea (strain 34H / ATCC BAA-681) (Vibrio psychroerythus).